The chain runs to 34 residues: Cuticle protein 9 (34 aa).

The polypeptide is Cuticle protein 9 (Blaberus craniifer (Death's head cockroach)).